The primary structure comprises 427 residues: 3-isopropylmalate dehydratase large subunit (427 aa).

The [4Fe-4S] cluster site is built by Cys-308, Cys-368, and Cys-371.

This sequence belongs to the aconitase/IPM isomerase family. LeuC type 2 subfamily. Heterodimer of LeuC and LeuD. It depends on [4Fe-4S] cluster as a cofactor.

The enzyme catalyses (2R,3S)-3-isopropylmalate = (2S)-2-isopropylmalate. It functions in the pathway amino-acid biosynthesis; L-leucine biosynthesis; L-leucine from 3-methyl-2-oxobutanoate: step 2/4. In terms of biological role, catalyzes the isomerization between 2-isopropylmalate and 3-isopropylmalate, via the formation of 2-isopropylmaleate. The chain is 3-isopropylmalate dehydratase large subunit from Geobacter metallireducens (strain ATCC 53774 / DSM 7210 / GS-15).